The chain runs to 398 residues: tRNA pseudouridine synthase D (398 aa).

The active-site Nucleophile is the aspartate 76. A TRUD domain is found at 151–360; the sequence is GVPNFFGEQR…MPGERRPLRI (210 aa).

The protein belongs to the pseudouridine synthase TruD family.

It carries out the reaction uridine(13) in tRNA = pseudouridine(13) in tRNA. Functionally, responsible for synthesis of pseudouridine from uracil-13 in transfer RNAs. In Syntrophotalea carbinolica (strain DSM 2380 / NBRC 103641 / GraBd1) (Pelobacter carbinolicus), this protein is tRNA pseudouridine synthase D.